Consider the following 498-residue polypeptide: Glycerol kinase (498 aa).

Residue Thr-12 coordinates ADP. The ATP site is built by Thr-12, Thr-13, and Ser-14. Thr-12 is a sn-glycerol 3-phosphate binding site. ADP is bound at residue Arg-16. Residues Arg-82, Glu-83, Tyr-134, and Asp-241 each contribute to the sn-glycerol 3-phosphate site. Residues Arg-82, Glu-83, Tyr-134, Asp-241, and Gln-242 each coordinate glycerol. 2 residues coordinate ADP: Thr-263 and Gly-310. Residues Thr-263, Gly-310, Gln-314, and Gly-411 each contribute to the ATP site. Gly-411 and Asn-415 together coordinate ADP.

The protein belongs to the FGGY kinase family.

It catalyses the reaction glycerol + ATP = sn-glycerol 3-phosphate + ADP + H(+). It functions in the pathway polyol metabolism; glycerol degradation via glycerol kinase pathway; sn-glycerol 3-phosphate from glycerol: step 1/1. Its activity is regulated as follows. Inhibited by fructose 1,6-bisphosphate (FBP). Key enzyme in the regulation of glycerol uptake and metabolism. Catalyzes the phosphorylation of glycerol to yield sn-glycerol 3-phosphate. In Janthinobacterium sp. (strain Marseille) (Minibacterium massiliensis), this protein is Glycerol kinase.